The primary structure comprises 234 residues: 2,3,4,5-tetrahydropyridine-2,6-dicarboxylate N-acetyltransferase (234 aa).

This sequence belongs to the transferase hexapeptide repeat family. DapH subfamily.

It catalyses the reaction (S)-2,3,4,5-tetrahydrodipicolinate + acetyl-CoA + H2O = L-2-acetamido-6-oxoheptanedioate + CoA. Its pathway is amino-acid biosynthesis; L-lysine biosynthesis via DAP pathway; LL-2,6-diaminopimelate from (S)-tetrahydrodipicolinate (acetylase route): step 1/3. Catalyzes the transfer of an acetyl group from acetyl-CoA to tetrahydrodipicolinate. In Leuconostoc citreum (strain KM20), this protein is 2,3,4,5-tetrahydropyridine-2,6-dicarboxylate N-acetyltransferase.